The chain runs to 301 residues: Glycine--tRNA ligase alpha subunit (301 aa).

The protein belongs to the class-II aminoacyl-tRNA synthetase family. In terms of assembly, tetramer of two alpha and two beta subunits.

It is found in the cytoplasm. It catalyses the reaction tRNA(Gly) + glycine + ATP = glycyl-tRNA(Gly) + AMP + diphosphate. The sequence is that of Glycine--tRNA ligase alpha subunit from Bordetella avium (strain 197N).